A 113-amino-acid chain; its full sequence is Sperm-associated antigen 11B (113 aa).

Positions methionine 1 to serine 26 are cleaved as a signal peptide. Intrachain disulfides connect cysteine 80-cysteine 108, cysteine 87-cysteine 101, and cysteine 91-cysteine 109.

This sequence belongs to the beta-defensin family.

It localises to the secreted. Functionally, has antimicrobial activity against E.coli. Plays a role in the defense response in the male reproductive tract, contributing to sperm maturation, storage and protection. The chain is Sperm-associated antigen 11B from Mus musculus (Mouse).